Here is a 98-residue protein sequence, read N- to C-terminus: NADH-ubiquinone oxidoreductase chain 4L (98 aa).

The next 3 helical transmembrane spans lie at 1 to 21, 29 to 49, and 61 to 81; these read MPFIYINILLAFFISFIGLLM, SLLCLEGMMLSLYILGTLLCL, and MILLVFAACEAAVGLALLVMV.

This sequence belongs to the complex I subunit 4L family. In terms of assembly, core subunit of respiratory chain NADH dehydrogenase (Complex I) which is composed of 45 different subunits.

Its subcellular location is the mitochondrion inner membrane. It catalyses the reaction a ubiquinone + NADH + 5 H(+)(in) = a ubiquinol + NAD(+) + 4 H(+)(out). Functionally, core subunit of the mitochondrial membrane respiratory chain NADH dehydrogenase (Complex I) which catalyzes electron transfer from NADH through the respiratory chain, using ubiquinone as an electron acceptor. Part of the enzyme membrane arm which is embedded in the lipid bilayer and involved in proton translocation. The chain is NADH-ubiquinone oxidoreductase chain 4L (MT-ND4L) from Dugong dugon (Dugong).